The following is a 347-amino-acid chain: Ribosomal RNA large subunit methyltransferase M (347 aa).

Residues Ser-184, 217–220 (APGG), Asp-236, Asp-256, and Asp-272 each bind S-adenosyl-L-methionine. The Proton acceptor role is filled by Lys-301.

Belongs to the class I-like SAM-binding methyltransferase superfamily. RNA methyltransferase RlmE family. RlmM subfamily. In terms of assembly, monomer.

The protein localises to the cytoplasm. The enzyme catalyses cytidine(2498) in 23S rRNA + S-adenosyl-L-methionine = 2'-O-methylcytidine(2498) in 23S rRNA + S-adenosyl-L-homocysteine + H(+). Catalyzes the 2'-O-methylation at nucleotide C2498 in 23S rRNA. The polypeptide is Ribosomal RNA large subunit methyltransferase M (Xanthomonas campestris pv. campestris (strain 8004)).